A 299-amino-acid polypeptide reads, in one-letter code: Taste receptor type 2 member 16 (299 aa).

The Extracellular segment spans residues 1 to 5; it reads MVPTQ. A helical membrane pass occupies residues 6–26; the sequence is VTIFSIIMYVLESLVIIVQSC. At 27-47 the chain is on the cytoplasmic side; it reads TTVAVLFREWMHFQRLSPVET. The chain crosses the membrane as a helical span at residues 48–68; that stretch reads ILISLGISHFCLQWTSMLYNF. The Extracellular segment spans residues 69-82; it reads GTYSRPVLLFWKVS. Residues 83 to 103 traverse the membrane as a helical segment; sequence VVWEFMNILTFWLTSWLAVLY. The Cytoplasmic portion of the chain corresponds to 104 to 125; it reads CVKVSSFTHPIFLWLRMKILKL. A helical membrane pass occupies residues 126-146; the sequence is VLWLILGALIASCLSIIPSVV. The Extracellular segment spans residues 147–183; the sequence is KYHIQMELVTLDNLPKNNSLILRLQQFEWYFSNPLKM. N-linked (GlcNAc...) asparagine glycosylation is present at Asn163. Residues 184–204 form a helical membrane-spanning segment; it reads IGFGIPFFVFLASIILLTVSL. The Cytoplasmic portion of the chain corresponds to 205-233; the sequence is VQHWVQMKHYSSSNSSLKAQFTVLKSLAT. A helical transmembrane segment spans residues 234–254; that stretch reads FFTFFTSYFLTIVISFIGTVF. Residues 255–258 lie on the Extracellular side of the membrane; that stretch reads DKKS. The chain crosses the membrane as a helical span at residues 259 to 279; sequence WFWVCEAVIYGLVCIHFTSLM. At 280–299 the chain is on the cytoplasmic side; the sequence is MSNPALKKALKLQFWSPEPS.

Belongs to the G-protein coupled receptor T2R family. Interacts with RTP3 and RTP4.

The protein resides in the cell membrane. In terms of biological role, gustducin-coupled receptor implicated in the perception of bitter compounds in the oral cavity and the gastrointestinal tract. Signals through PLCB2 and the calcium-regulated cation channel TRPM5. This Mus musculus (Mouse) protein is Taste receptor type 2 member 16 (Tas2r16).